The following is a 159-amino-acid chain: Transcription elongation factor GreA (159 aa).

Residues 46–73 (AEYHAAKEEQSFVEGRIKEIELKLSRMQ) adopt a coiled-coil conformation.

The protein belongs to the GreA/GreB family.

In terms of biological role, necessary for efficient RNA polymerase transcription elongation past template-encoded arresting sites. The arresting sites in DNA have the property of trapping a certain fraction of elongating RNA polymerases that pass through, resulting in locked ternary complexes. Cleavage of the nascent transcript by cleavage factors such as GreA or GreB allows the resumption of elongation from the new 3'terminus. GreA releases sequences of 2 to 3 nucleotides. The protein is Transcription elongation factor GreA of Vesicomyosocius okutanii subsp. Calyptogena okutanii (strain HA).